Reading from the N-terminus, the 189-residue chain is Dual specificity phosphatase 29 (189 aa).

The region spanning 33-182 is the Tyrosine-protein phosphatase domain; it reads HVNEVWPGVY…LRELDTHLQE (150 aa). 126-133 is a substrate binding site; the sequence is HCVMGRSR. Residue C127 is the Phosphocysteine intermediate of the active site.

Belongs to the protein-tyrosine phosphatase family. Non-receptor class dual specificity subfamily.

Its subcellular location is the cytoplasm. It is found in the nucleus. The enzyme catalyses O-phospho-L-tyrosyl-[protein] + H2O = L-tyrosyl-[protein] + phosphate. It carries out the reaction O-phospho-L-seryl-[protein] + H2O = L-seryl-[protein] + phosphate. It catalyses the reaction O-phospho-L-threonyl-[protein] + H2O = L-threonyl-[protein] + phosphate. In terms of biological role, dual specificity phosphatase able to dephosphorylate phosphotyrosine, phosphoserine and phosphothreonine residues within the same substrate, with a preference for phosphotyrosine as a substrate. Involved in the modulation of AMPK and MAPK1/2 signaling pathways. This is Dual specificity phosphatase 29 (dusp29) from Danio rerio (Zebrafish).